We begin with the raw amino-acid sequence, 264 residues long: Indole-3-glycerol phosphate synthase (264 aa).

It belongs to the TrpC family.

It carries out the reaction 1-(2-carboxyphenylamino)-1-deoxy-D-ribulose 5-phosphate + H(+) = (1S,2R)-1-C-(indol-3-yl)glycerol 3-phosphate + CO2 + H2O. Its pathway is amino-acid biosynthesis; L-tryptophan biosynthesis; L-tryptophan from chorismate: step 4/5. This chain is Indole-3-glycerol phosphate synthase, found in Rhizorhabdus wittichii (strain DSM 6014 / CCUG 31198 / JCM 15750 / NBRC 105917 / EY 4224 / RW1) (Sphingomonas wittichii).